The sequence spans 286 residues: Meteorin-like protein (286 aa).

A signal peptide spans 1–20 (MLRRGLLSFFMVILIDRGTS). Disulfide bonds link Cys28–Cys51, Cys84–Cys120, Cys165–Cys235, Cys168–Cys259, and Cys178–Cys281. The N-linked (GlcNAc...) asparagine glycan is linked to Asn203.

Belongs to the meteorin family.

The protein resides in the secreted. In terms of biological role, hormone induced following exercise or cold exposure that promotes energy expenditure. Induced either in the skeletal muscle after exercise or in adipose tissue following cold exposure and is present in the circulation. Able to stimulate energy expenditure associated with the browning of the white fat depots and improves glucose tolerance. The chain is Meteorin-like protein (metrnl) from Xenopus laevis (African clawed frog).